We begin with the raw amino-acid sequence, 201 residues long: Large ribosomal subunit protein uL4 (201 aa).

A disordered region spans residues 44–68; sequence KAQKTRSEVAGTTKKSKKQKGGGAR.

Belongs to the universal ribosomal protein uL4 family. As to quaternary structure, part of the 50S ribosomal subunit.

One of the primary rRNA binding proteins, this protein initially binds near the 5'-end of the 23S rRNA. It is important during the early stages of 50S assembly. It makes multiple contacts with different domains of the 23S rRNA in the assembled 50S subunit and ribosome. In terms of biological role, forms part of the polypeptide exit tunnel. The sequence is that of Large ribosomal subunit protein uL4 from Xanthomonas campestris pv. campestris (strain 8004).